A 355-amino-acid polypeptide reads, in one-letter code: D-alanine--D-alanine ligase (355 aa).

In terms of domain architecture, ATP-grasp spans 143–350 (KTIFSNHKLP…IEQLVAKLVD (208 aa)). 178-233 (LKKLKFPVFVKPSNSGSSLGISKVKNESEILLALEKAWGIDPRILIEEGLEVREIE) is an ATP binding site. Positions 303, 317, and 319 each coordinate Mg(2+).

This sequence belongs to the D-alanine--D-alanine ligase family. Mg(2+) serves as cofactor. The cofactor is Mn(2+).

It is found in the cytoplasm. It carries out the reaction 2 D-alanine + ATP = D-alanyl-D-alanine + ADP + phosphate + H(+). The protein operates within cell wall biogenesis; peptidoglycan biosynthesis. Its function is as follows. Cell wall formation. The polypeptide is D-alanine--D-alanine ligase (Prochlorococcus marinus (strain MIT 9301)).